Consider the following 129-residue polypeptide: Histone H2A type 2-C (129 aa).

A disordered region spans residues Met-1–Ala-22. At Ser-2 the chain carries N-acetylserine. Ser-2 carries the phosphoserine; by RPS6KA5 modification. Arg-4 is modified (citrulline; alternate). A Symmetric dimethylarginine; by PRMT5; alternate modification is found at Arg-4. Lys-6 and Lys-10 each carry N6-(2-hydroxyisobutyryl)lysine; alternate. The residue at position 6 (Lys-6) is an N6-acetyllysine; alternate. Over residues Gln-7–Ser-19 the composition is skewed to basic residues. Lys-10 carries the N6-lactoyllysine; alternate modification. Lys-10 bears the N6-succinyllysine; alternate mark. Residues Lys-14 and Lys-16 each participate in a glycyl lysine isopeptide (Lys-Gly) (interchain with G-Cter in ubiquitin) cross-link. An N6-(2-hydroxyisobutyryl)lysine; alternate modification is found at Lys-37. N6-(beta-hydroxybutyryl)lysine; alternate is present on Lys-37. Residue Lys-37 is modified to N6-crotonyllysine; alternate. N6-(2-hydroxyisobutyryl)lysine is present on residues Lys-75 and Lys-76. N6-(2-hydroxyisobutyryl)lysine; alternate is present on Lys-96. Lys-96 carries the N6-succinyllysine; alternate modification. N6-glutaryllysine; alternate is present on Lys-96. Lys-100 carries the post-translational modification N6-glutaryllysine. At Gln-105 the chain carries N5-methylglutamine. Lys-119 bears the N6-(2-hydroxyisobutyryl)lysine; alternate mark. Residues Lys-119 and Lys-120 each carry the N6-crotonyllysine; alternate modification. N6-glutaryllysine; alternate occurs at positions 119 and 120. Lys-120 is covalently cross-linked (Glycyl lysine isopeptide (Lys-Gly) (interchain with G-Cter in ubiquitin); alternate). Thr-121 is modified (phosphothreonine; by DCAF1). Ser-123 carries the phosphoserine modification. Position 125 is an N6-crotonyllysine (Lys-125).

This sequence belongs to the histone H2A family. The nucleosome is a histone octamer containing two molecules each of H2A, H2B, H3 and H4 assembled in one H3-H4 heterotetramer and two H2A-H2B heterodimers. The octamer wraps approximately 147 bp of DNA. Deiminated on Arg-4 in granulocytes upon calcium entry. Post-translationally, monoubiquitination of Lys-120 (H2AK119Ub) by RING1, TRIM37 and RNF2/RING2 complex gives a specific tag for epigenetic transcriptional repression and participates in X chromosome inactivation of female mammals. It is involved in the initiation of both imprinted and random X inactivation. Ubiquitinated H2A is enriched in inactive X chromosome chromatin. Ubiquitination of H2A functions downstream of methylation of 'Lys-27' of histone H3 (H3K27me). H2AK119Ub by RNF2/RING2 can also be induced by ultraviolet and may be involved in DNA repair. Following DNA double-strand breaks (DSBs), it is ubiquitinated through 'Lys-63' linkage of ubiquitin moieties by the E2 ligase UBE2N and the E3 ligases RNF8 and RNF168, leading to the recruitment of repair proteins to sites of DNA damage. Ubiquitination at Lys-14 and Lys-16 (H2AK13Ub and H2AK15Ub, respectively) in response to DNA damage is initiated by RNF168 that mediates monoubiquitination at these 2 sites, and 'Lys-63'-linked ubiquitin are then conjugated to monoubiquitin; RNF8 is able to extend 'Lys-63'-linked ubiquitin chains in vitro. H2AK119Ub and ionizing radiation-induced 'Lys-63'-linked ubiquitination (H2AK13Ub and H2AK15Ub) are distinct events. In terms of processing, phosphorylation on Ser-2 (H2AS1ph) is enhanced during mitosis. Phosphorylation on Ser-2 by RPS6KA5/MSK1 directly represses transcription. Acetylation of H3 inhibits Ser-2 phosphorylation by RPS6KA5/MSK1. Phosphorylation at Thr-121 (H2AT120ph) by DCAF1 is present in the regulatory region of many tumor suppresor genes and down-regulates their transcription. Symmetric dimethylation on Arg-4 by the PRDM1/PRMT5 complex may play a crucial role in the germ-cell lineage. Post-translationally, glutamine methylation at Gln-105 (H2AQ104me) by FBL is specifically dedicated to polymerase I. It is present at 35S ribosomal DNA locus and impairs binding of the FACT complex. In terms of processing, crotonylation (Kcr) is specifically present in male germ cells and marks testis-specific genes in post-meiotic cells, including X-linked genes that escape sex chromosome inactivation in haploid cells. Crotonylation marks active promoters and enhancers and confers resistance to transcriptional repressors. It is also associated with post-meiotically activated genes on autosomes. Lactylated in macrophages by EP300/P300 by using lactoyl-CoA directly derived from endogenous or exogenous lactate, leading to stimulates gene transcription.

Its subcellular location is the nucleus. It localises to the chromosome. Its function is as follows. Core component of nucleosome. Nucleosomes wrap and compact DNA into chromatin, limiting DNA accessibility to the cellular machineries which require DNA as a template. Histones thereby play a central role in transcription regulation, DNA repair, DNA replication and chromosomal stability. DNA accessibility is regulated via a complex set of post-translational modifications of histones, also called histone code, and nucleosome remodeling. This chain is Histone H2A type 2-C, found in Bos taurus (Bovine).